The following is a 238-amino-acid chain: Chromosome partition protein MukE (238 aa).

It belongs to the MukE family. As to quaternary structure, interacts, and probably forms a ternary complex, with MukF and MukB. The complex formation is stimulated by calcium or magnesium.

It localises to the cytoplasm. The protein resides in the nucleoid. In terms of biological role, involved in chromosome condensation, segregation and cell cycle progression. May participate in facilitating chromosome segregation by condensation DNA from both sides of a centrally located replisome during cell division. Probably acts via its interaction with MukB and MukF. This Haemophilus ducreyi (strain 35000HP / ATCC 700724) protein is Chromosome partition protein MukE.